A 209-amino-acid chain; its full sequence is MEWKIDKDCVDYQMSLMFMQERVKQVINGSGDELVWMLQYEALYTGGTSADPQDLLNSDLFPVFNVGRGGKYTYHGPGQRVIYPILNLRSRNICDLHKYIYLLEEVVIVTLDNFGINGCRKEGHIGVWVGTGCQPPKKIAAIGVRVSKWVSYHGIAVNLYPDLSHYDAIIPCGIKNFGVTSAKEMGIEIRSFNAFDRYFKKSFVKIFGE.

Residues glycine 29 to glutamate 209 enclose the BPL/LPL catalytic domain. Substrate-binding positions include arginine 68 to histidine 75, alanine 141 to glycine 143, and glycine 154 to alanine 156. Cysteine 172 (acyl-thioester intermediate) is an active-site residue.

The protein belongs to the LipB family.

The protein resides in the cytoplasm. It carries out the reaction octanoyl-[ACP] + L-lysyl-[protein] = N(6)-octanoyl-L-lysyl-[protein] + holo-[ACP] + H(+). Its pathway is protein modification; protein lipoylation via endogenous pathway; protein N(6)-(lipoyl)lysine from octanoyl-[acyl-carrier-protein]: step 1/2. In terms of biological role, catalyzes the transfer of endogenously produced octanoic acid from octanoyl-acyl-carrier-protein onto the lipoyl domains of lipoate-dependent enzymes. Lipoyl-ACP can also act as a substrate although octanoyl-ACP is likely to be the physiological substrate. This chain is Octanoyltransferase, found in Neorickettsia sennetsu (strain ATCC VR-367 / Miyayama) (Ehrlichia sennetsu).